Consider the following 156-residue polypeptide: MPRKGPAPKRPLVNDPVYGSQLVTQLVNKILLKGKKSLAERIVYGALEHARDKTGTDPVITLKRALDNVKPALEVRSRRVGGATYQVPVEVRPDRSTTLALRWLVGFSRQRREKTMIERLANEILDASNGLGASVKRREDTHKMAEANRAFAHYRW.

Belongs to the universal ribosomal protein uS7 family. In terms of assembly, part of the 30S ribosomal subunit. Contacts proteins S9 and S11.

In terms of biological role, one of the primary rRNA binding proteins, it binds directly to 16S rRNA where it nucleates assembly of the head domain of the 30S subunit. Is located at the subunit interface close to the decoding center, probably blocks exit of the E-site tRNA. The protein is Small ribosomal subunit protein uS7 of Mycobacterium leprae (strain Br4923).